Reading from the N-terminus, the 145-residue chain is SsrA-binding protein (145 aa).

This sequence belongs to the SmpB family.

It localises to the cytoplasm. In terms of biological role, required for rescue of stalled ribosomes mediated by trans-translation. Binds to transfer-messenger RNA (tmRNA), required for stable association of tmRNA with ribosomes. tmRNA and SmpB together mimic tRNA shape, replacing the anticodon stem-loop with SmpB. tmRNA is encoded by the ssrA gene; the 2 termini fold to resemble tRNA(Ala) and it encodes a 'tag peptide', a short internal open reading frame. During trans-translation Ala-aminoacylated tmRNA acts like a tRNA, entering the A-site of stalled ribosomes, displacing the stalled mRNA. The ribosome then switches to translate the ORF on the tmRNA; the nascent peptide is terminated with the 'tag peptide' encoded by the tmRNA and targeted for degradation. The ribosome is freed to recommence translation, which seems to be the essential function of trans-translation. The protein is SsrA-binding protein of Mesomycoplasma hyopneumoniae (strain 232) (Mycoplasma hyopneumoniae).